Here is a 289-residue protein sequence, read N- to C-terminus: Probable ABC transporter permease protein BruAb2_0483 (289 aa).

6 helical membrane-spanning segments follow: residues 9-29 (FLILPSLLLAAVVIFWPVVHL), 70-90 (VWTVAVVGGALVLSIPVAIIL), 99-119 (VARVIIMLPWAVSLTMTAIFW), 144-166 (IQWLASAATAFPMQILVGILVTV), 213-233 (IAIVLNTIYVFNSFPIIWVMT), and 258-278 (FGEASAVSLIMLAILLVFTVI). One can recognise an ABC transmembrane type-1 domain in the interval 65–279 (LWRTAVWTVA…AILLVFTVIY (215 aa)).

Belongs to the binding-protein-dependent transport system permease family. As to quaternary structure, the complex is composed of two ATP-binding proteins (BruAb2_0487), two transmembrane proteins (BruAb2_0483) and a solute-binding protein (BruAb2_0484).

The protein localises to the cell inner membrane. In terms of biological role, probably part of an ABC transporter complex. Probably responsible for the translocation of the substrate across the membrane. In Brucella abortus biovar 1 (strain 9-941), this protein is Probable ABC transporter permease protein BruAb2_0483.